A 1786-amino-acid polypeptide reads, in one-letter code: uncharacterized protein (1786 aa).

3 disordered regions span residues 140–191 (QGLR…LPEA), 203–329 (RRES…RGGV), and 400–480 (GGSD…TPPE). A compositionally biased stretch (polar residues) spans 149–158 (SDMNSQTSLT). Residues 232-247 (GHAPEAPAPGESPASS) are compositionally biased toward low complexity. Polar residues predominate over residues 248-259 (QCLPSQACENDF). Residues 306-329 (TSCRQHREEAGDRAGAGEDKRGGV) show a composition bias toward basic and acidic residues. Low complexity predominate over residues 422–438 (STTPSTNTTRTPSPISS). The segment covering 467–480 (VPPPTGPGTATPPE) has biased composition (pro residues). The residue at position 721 (Thr721) is a Phosphothreonine. Disordered stretches follow at residues 746–907 (SESK…SDGH), 1081–1180 (VRDV…NSSP), 1218–1242 (ASAQ…PKPA), 1291–1348 (KEGV…VSAR), 1362–1460 (SLYI…NSDC), and 1477–1550 (LLGR…EHTP). Composition is skewed to basic and acidic residues over residues 810–828 (MQRE…DTSH) and 845–861 (KPWE…HSEA). The span at 1105-1115 (KGSGDSSDKGS) shows a compositional bias: low complexity. A compositionally biased stretch (polar residues) spans 1131–1140 (TPASGGSRSL). Positions 1153–1164 (PREEGVDREPRE) are enriched in basic and acidic residues. Residues 1167-1180 (SQVSNGGRLLNSSP) show a composition bias toward polar residues. Phosphoserine is present on Ser1179. Composition is skewed to basic and acidic residues over residues 1223-1238 (TPEK…EGKA) and 1301-1319 (DPDK…DTGH). 3 stretches are compositionally biased toward polar residues: residues 1336-1345 (RNSNPSTESV), 1389-1401 (NVFT…TQKT), and 1504-1521 (ARSQ…SGTS). Residue Arg1767 is modified to Omega-N-methylarginine.

This is an uncharacterized protein from Mus musculus (Mouse).